The primary structure comprises 433 residues: uncharacterized protein (433 aa).

A methylglyoxal synthase region spans residues 1-126; the sequence is MAAHIALIAH…VIKLLGKTKT (126 aa). The 145-residue stretch at 1–145 folds into the MGS-like domain; sequence MAAHIALIAH…GQGNVERELD (145 aa). Asp-62 is a catalytic residue. A DAGKc domain is found at 127-262; that stretch reads GHLIFNPVAG…VDTALCNDIP (136 aa).

In the N-terminal section; belongs to the methylglyoxal synthase family.

This is an uncharacterized protein from Synechocystis sp. (strain ATCC 27184 / PCC 6803 / Kazusa).